The primary structure comprises 92 residues: Small ribosomal subunit protein uS19 (92 aa).

The protein belongs to the universal ribosomal protein uS19 family.

In terms of biological role, protein S19 forms a complex with S13 that binds strongly to the 16S ribosomal RNA. This Geobacillus kaustophilus (strain HTA426) protein is Small ribosomal subunit protein uS19.